The chain runs to 518 residues: MSFSPSIAGLSGPLSALSDALTTAPESAFASLGSVFLTRLPAAPLSAPYVVGFSAETAALLGLEPGIENDPAFAELFSGNATREWPAEALPYASVYSGHQFGVWAGQLGDGRALGLGEVEHGGRRFELQLKGAGRTPYSRMGDGRAVLRSSIREYLCSEAMHHLGIPTTRALCVIGSDQPVRRETVETAAVVTRVAPSFVRFGHFEHFYSNDRTDALRALADHVIERFYPHCREADDPYLALLNEAVISTADLMVEWQAVGFCHGVMNTDNMSILGLTIDYGPFGFMDGFDAGYICNHSDSQGRYAYRMQPQIAYWNLFCLAQGLLPLLGEKHEESVRGDKAIEDAQRVLGGFKDRFAPALERRMRAKLGLETERAGDDALANRLFEVMHANRADFTLTFRNLARVSKHDASGDAAVRDLFLDRAAFDAWVNDYRARLSEETREDAARAIAMNRVNPKFVLRNHLAETAIRRAKEKDFSEVERLAAVLRRPFDEQPEHEAYAGLPPDWASSLEVSCSS.

ATP-binding residues include Gly109, Gly111, Arg112, Lys131, Asp143, Gly144, Arg194, and Arg201. Catalysis depends on Asp270, which acts as the Proton acceptor. Residues Asn271 and Asp280 each contribute to the Mg(2+) site. Residue Asp280 participates in ATP binding.

The protein belongs to the SELO family. Mg(2+) serves as cofactor. Requires Mn(2+) as cofactor.

It carries out the reaction L-seryl-[protein] + ATP = 3-O-(5'-adenylyl)-L-seryl-[protein] + diphosphate. It catalyses the reaction L-threonyl-[protein] + ATP = 3-O-(5'-adenylyl)-L-threonyl-[protein] + diphosphate. The enzyme catalyses L-tyrosyl-[protein] + ATP = O-(5'-adenylyl)-L-tyrosyl-[protein] + diphosphate. The catalysed reaction is L-histidyl-[protein] + UTP = N(tele)-(5'-uridylyl)-L-histidyl-[protein] + diphosphate. It carries out the reaction L-seryl-[protein] + UTP = O-(5'-uridylyl)-L-seryl-[protein] + diphosphate. It catalyses the reaction L-tyrosyl-[protein] + UTP = O-(5'-uridylyl)-L-tyrosyl-[protein] + diphosphate. Its function is as follows. Nucleotidyltransferase involved in the post-translational modification of proteins. It can catalyze the addition of adenosine monophosphate (AMP) or uridine monophosphate (UMP) to a protein, resulting in modifications known as AMPylation and UMPylation. This is Protein nucleotidyltransferase YdiU from Paraburkholderia xenovorans (strain LB400).